The chain runs to 447 residues: Chorismate synthase, chloroplastic (447 aa).

The segment at 1–24 (MASSLSTKPFLSGSRRRSTTDGSG) is disordered. Residues 1–57 (MASSLSTKPFLSGSRRRSTTDGSGWSYFQTSDLRQLSNQSVQISVRRQTAPLKLVVQ) constitute a chloroplast transit peptide.

This sequence belongs to the chorismate synthase family. In terms of assembly, homotetramer. FMNH2 is required as a cofactor. The N-terminus is blocked.

Its subcellular location is the plastid. It is found in the chloroplast. It catalyses the reaction 5-O-(1-carboxyvinyl)-3-phosphoshikimate = chorismate + phosphate. It functions in the pathway metabolic intermediate biosynthesis; chorismate biosynthesis; chorismate from D-erythrose 4-phosphate and phosphoenolpyruvate: step 7/7. In terms of biological role, catalyzes the last common step of the biosynthesis of aromatic amino acids, produced via the shikimic acid pathway. The sequence is that of Chorismate synthase, chloroplastic from Capnoides sempervirens (Rock-harlequin).